The following is a 954-amino-acid chain: Serine/threonine-protein kinase ste20 (954 aa).

Low complexity predominate over residues 1–17 (MDGQLSLLSPTSSSSTS). Disordered regions lie at residues 1–165 (MDGQ…YDPL) and 203–316 (AAPA…RKKS). Residues 18 to 28 (HSRKRLTKKQR) show a composition bias toward basic residues. Polar residues-rich tracts occupy residues 33–42 (NHRTSSSFNV), 57–75 (SASS…SLAR), and 100–121 (RSHT…TIPT). Low complexity-rich tracts occupy residues 127-136 (SPASSSQPQT), 143-153 (SAVASTTVTSS), and 203-214 (AAPAPTSTTTIA). Residues 224 to 234 (VAPPPPPPPPA) are compositionally biased toward pro residues. Low complexity-rich tracts occupy residues 245–256 (ARSSKPSKSPKS) and 265–277 (ASSF…FSSA). The region spanning 334-347 (ISAPENPVHVTHVG) is the CRIB domain. Disordered regions lie at residues 440 to 562 (PMIS…VQAS) and 587 to 655 (QAMA…SNAI). 2 stretches are compositionally biased toward pro residues: residues 463–475 (RAPP…PGPL) and 514–527 (MPPP…PYLP). The Protein kinase domain occupies 674-925 (YRGFTKIGQG…AHDLLRHDFM (252 aa)). Residues 680-688 (IGQGASGGV) and Lys703 contribute to the ATP site. The active-site Proton acceptor is Asp793.

This sequence belongs to the protein kinase superfamily. STE Ser/Thr protein kinase family. STE20 subfamily.

It is found in the cytoplasm. The protein resides in the nucleus. The enzyme catalyses L-seryl-[protein] + ATP = O-phospho-L-seryl-[protein] + ADP + H(+). It carries out the reaction L-threonyl-[protein] + ATP = O-phospho-L-threonyl-[protein] + ADP + H(+). Functionally, MAP4K component of the MAPK pathway required for the mating pheromone response and the regulation of cell polarity and cell cycle. Phosphorylates histone H2B to form H2BS10ph. The chain is Serine/threonine-protein kinase ste20 (stk-4) from Neurospora crassa (strain ATCC 24698 / 74-OR23-1A / CBS 708.71 / DSM 1257 / FGSC 987).